Reading from the N-terminus, the 144-residue chain is Large ribosomal subunit protein uL15 (144 aa).

Residues 1 to 52 (MRLNTISSAPGAKQAEKRVGRGIGSGWGKTCGRGHKGQKSRSGGFHKVGFEG) form a disordered region. A compositionally biased stretch (gly residues) spans 21-31 (RGIGSGWGKTC).

Belongs to the universal ribosomal protein uL15 family. Part of the 50S ribosomal subunit.

Binds to the 23S rRNA. The sequence is that of Large ribosomal subunit protein uL15 from Nitrosococcus oceani (strain ATCC 19707 / BCRC 17464 / JCM 30415 / NCIMB 11848 / C-107).